The primary structure comprises 604 residues: Zinc finger protein chinmo (604 aa).

Residues 32-98 enclose the BTB domain; it reads ADVILSCDGV…MYKGEVHVSQ (67 aa). Disordered regions lie at residues 122-155, 291-310, 330-437, and 450-470; these read RLAA…SGGS, CDSL…GYTH, RSPY…DEST, and NLKY…TPNT. The span at 364-374 shows a compositional bias: low complexity; sequence PSSSASSTAPT. The span at 384–409 shows a compositional bias: polar residues; that stretch reads ASPQSSRYENHSPSTTAGNGNATSSL. Acidic residues predominate over residues 425-437; sequence ANDDDRELMDEST. Over residues 461–470 the composition is skewed to low complexity; that stretch reads SNTSSTTPNT. C2H2-type zinc fingers lie at residues 517 to 540 and 545 to 568; these read LKCL…RQRH and VPCP…AREH.

In terms of tissue distribution, broadly expressed in the developing larval central nervous system (at protein level). Expressed in the larval lymph gland and circulating hemocytes (at protein level). Expressed in all cell types of the adult testis stem cell niche but not detected in somatic cells of the adult ovary (at protein level). In the testis, expressed at high levels in cyst stem cells and early cyst cells and, at lower levels, in germline stem cells (at protein level).

The protein resides in the nucleus. Required for morphological differentiation of postmitotic neurons during postembryonic brain development. Ensures production of appropriate neuron subtypes within a lineage by preventing precocious generation of late neuronal types of that lineage. Acts as a downstream mediator of the transcriptional activator Stat92e and is required for the development of the eye-antennal disk which gives rise to the adult eye, antenna and head capsule, for transcriptional repression of the Notch receptor ligand Ser and for the self-renewal of cyst stem cells in the testis. In the adult testis, maintains the male identify of adult somatic cyst stem cells. Represses expression and alternative splicing of transformer pre-mRNA, resulting in the production of the male-specific isoform of transcription factor dsx which ensures male-specific transcription of target genes. Plays a role in actin nuclear localization through its involvement in repressing the expression of the kinase Cdi. This maintains the cofilin/actin-depolymerizing factor homolog tsr in its unphosphorylated state which is required for actin nuclear import. This is Zinc finger protein chinmo from Drosophila melanogaster (Fruit fly).